The following is a 237-amino-acid chain: Phosphoribosylaminoimidazole-succinocarboxamide synthase (237 aa).

Belongs to the SAICAR synthetase family.

It catalyses the reaction 5-amino-1-(5-phospho-D-ribosyl)imidazole-4-carboxylate + L-aspartate + ATP = (2S)-2-[5-amino-1-(5-phospho-beta-D-ribosyl)imidazole-4-carboxamido]succinate + ADP + phosphate + 2 H(+). The protein operates within purine metabolism; IMP biosynthesis via de novo pathway; 5-amino-1-(5-phospho-D-ribosyl)imidazole-4-carboxamide from 5-amino-1-(5-phospho-D-ribosyl)imidazole-4-carboxylate: step 1/2. In Proteus mirabilis (strain HI4320), this protein is Phosphoribosylaminoimidazole-succinocarboxamide synthase.